A 290-amino-acid polypeptide reads, in one-letter code: MYG1 protein CPn_0489/CP_0265/CPj0489/CpB0509 (290 aa).

This sequence belongs to the MYG1 family.

In Chlamydia pneumoniae (Chlamydophila pneumoniae), this protein is MYG1 protein CPn_0489/CP_0265/CPj0489/CpB0509.